An 81-amino-acid polypeptide reads, in one-letter code: Large ribosomal subunit protein uL23 (81 aa).

It belongs to the universal ribosomal protein uL23 family. As to quaternary structure, part of the 50S ribosomal subunit. Contacts protein L29.

In terms of biological role, binds to 23S rRNA. One of the proteins that surrounds the polypeptide exit tunnel on the outside of the ribosome. The sequence is that of Large ribosomal subunit protein uL23 from Saccharolobus solfataricus (strain ATCC 35092 / DSM 1617 / JCM 11322 / P2) (Sulfolobus solfataricus).